Consider the following 152-residue polypeptide: Protein NrdI (152 aa).

Belongs to the NrdI family.

In terms of biological role, probably involved in ribonucleotide reductase function. This chain is Protein NrdI, found in Rhodococcus opacus (strain B4).